The primary structure comprises 1556 residues: Ferredoxin-dependent glutamate synthase 2 (1556 aa).

C37 serves as the catalytic For GATase activity. The region spanning 37 to 431 (CGVGFIANLR…PGQMIAVDLA (395 aa)) is the Glutamine amidotransferase type-2 domain. The [3Fe-4S] cluster site is built by C1173, C1179, and C1184. A disordered region spans residues 1533 to 1556 (PSEKDSPEANGDVSLTGEKTLTSV).

The protein belongs to the glutamate synthase family. [3Fe-4S] cluster is required as a cofactor. FAD serves as cofactor. Requires FMN as cofactor.

The catalysed reaction is 2 oxidized [2Fe-2S]-[ferredoxin] + 2 L-glutamate = L-glutamine + 2 reduced [2Fe-2S]-[ferredoxin] + 2-oxoglutarate + 2 H(+). It functions in the pathway amino-acid biosynthesis; L-glutamate biosynthesis via GLT pathway; L-glutamate from 2-oxoglutarate and L-glutamine (ferredoxin route): step 1/1. It participates in energy metabolism; nitrogen metabolism. In Synechocystis sp. (strain ATCC 27184 / PCC 6803 / Kazusa), this protein is Ferredoxin-dependent glutamate synthase 2 (gltS).